A 145-amino-acid chain; its full sequence is D-aminoacyl-tRNA deacylase (145 aa).

The Gly-cisPro motif, important for rejection of L-amino acids motif lies at 137–138; it reads GP.

This sequence belongs to the DTD family. Homodimer.

Its subcellular location is the cytoplasm. It catalyses the reaction glycyl-tRNA(Ala) + H2O = tRNA(Ala) + glycine + H(+). It carries out the reaction a D-aminoacyl-tRNA + H2O = a tRNA + a D-alpha-amino acid + H(+). In terms of biological role, an aminoacyl-tRNA editing enzyme that deacylates mischarged D-aminoacyl-tRNAs. Also deacylates mischarged glycyl-tRNA(Ala), protecting cells against glycine mischarging by AlaRS. Acts via tRNA-based rather than protein-based catalysis; rejects L-amino acids rather than detecting D-amino acids in the active site. By recycling D-aminoacyl-tRNA to D-amino acids and free tRNA molecules, this enzyme counteracts the toxicity associated with the formation of D-aminoacyl-tRNA entities in vivo and helps enforce protein L-homochirality. The chain is D-aminoacyl-tRNA deacylase from Enterobacter sp. (strain 638).